A 335-amino-acid polypeptide reads, in one-letter code: Ferrochelatase (335 aa).

His-194 and Glu-275 together coordinate Fe cation.

This sequence belongs to the ferrochelatase family.

It localises to the cytoplasm. It carries out the reaction heme b + 2 H(+) = protoporphyrin IX + Fe(2+). The protein operates within porphyrin-containing compound metabolism; protoheme biosynthesis; protoheme from protoporphyrin-IX: step 1/1. In terms of biological role, catalyzes the ferrous insertion into protoporphyrin IX. The sequence is that of Ferrochelatase from Sodalis glossinidius (strain morsitans).